We begin with the raw amino-acid sequence, 243 residues long: tRNA pseudouridine synthase A (243 aa).

D54 serves as the catalytic Nucleophile. Y112 serves as a coordination point for substrate.

The protein belongs to the tRNA pseudouridine synthase TruA family. Homodimer.

It carries out the reaction uridine(38/39/40) in tRNA = pseudouridine(38/39/40) in tRNA. Formation of pseudouridine at positions 38, 39 and 40 in the anticodon stem and loop of transfer RNAs. This chain is tRNA pseudouridine synthase A, found in Onion yellows phytoplasma (strain OY-M).